The following is a 418-amino-acid chain: Glutamyl-tRNA reductase (418 aa).

Residues 49 to 52 (TCNR), Ser-109, 114 to 116 (EPQ), and Gln-120 each bind substrate. Cys-50 (nucleophile) is an active-site residue. 189-194 (GAGETI) contributes to the NADP(+) binding site.

This sequence belongs to the glutamyl-tRNA reductase family. As to quaternary structure, homodimer.

The catalysed reaction is (S)-4-amino-5-oxopentanoate + tRNA(Glu) + NADP(+) = L-glutamyl-tRNA(Glu) + NADPH + H(+). Its pathway is porphyrin-containing compound metabolism; protoporphyrin-IX biosynthesis; 5-aminolevulinate from L-glutamyl-tRNA(Glu): step 1/2. Catalyzes the NADPH-dependent reduction of glutamyl-tRNA(Glu) to glutamate 1-semialdehyde (GSA). This is Glutamyl-tRNA reductase from Escherichia coli O127:H6 (strain E2348/69 / EPEC).